A 219-amino-acid chain; its full sequence is UPF0376 protein C36C5.12 (219 aa).

Residues 1–20 are Cytoplasmic-facing; it reads MGRLDVKNSWIEFHQDEMTS. Residues 21–43 traverse the membrane as a helical; Signal-anchor for type II membrane protein segment; the sequence is FLKLAIIGTVLLGVAHGANLTAA. The Extracellular portion of the chain corresponds to 44–219; the sequence is EKETYCELRS…VSKCDFSRLG (176 aa). Residues asparagine 104 and asparagine 204 are each glycosylated (N-linked (GlcNAc...) asparagine).

The protein belongs to the UPF0376 family.

It is found in the membrane. This chain is UPF0376 protein C36C5.12, found in Caenorhabditis elegans.